The chain runs to 364 residues: Glycine oxidase (364 aa).

FAD contacts are provided by residues 12–13, 32–33, 40–41, 45–47, and valine 173; these read VI, ER, AS, and GGI. A substrate-binding site is contributed by arginine 302. FAD is bound at residue 327 to 333; sequence HYRNGLV.

This sequence belongs to the DAO family. ThiO subfamily. Monomer. It depends on FAD as a cofactor.

The enzyme catalyses glycine + O2 + H2O = glyoxylate + H2O2 + NH4(+). It carries out the reaction sarcosine + O2 + H2O = methylamine + glyoxylate + H2O2. Its pathway is cofactor biosynthesis; thiamine diphosphate biosynthesis. In terms of biological role, catalyzes the oxidation of glycine, leading to glyoxyl imine and hydrogen peroxide as primary products; glyoxyl imine is used for the biosynthesis of the thiazole ring of thiamine. Otherwise, glyoxyl imine is spontaneously hydrolyzed in water to produce glyoxylate and ammonia. Can also use sarcosine (N-methylglycine) as substrate. This Pseudomonas aeruginosa (strain ATCC 15692 / DSM 22644 / CIP 104116 / JCM 14847 / LMG 12228 / 1C / PRS 101 / PAO1) protein is Glycine oxidase.